A 492-amino-acid polypeptide reads, in one-letter code: Tyrosine--tRNA ligase, mitochondrial (492 aa).

Tyr-89 contacts L-tyrosine. Asp-93 provides a ligand contact to ATP. A 'HIGH' region motif is present at residues 94–103 (PTAQSLHLGN). L-tyrosine is bound by residues Asp-133, Tyr-239, Gln-243, Asp-246, and Gln-265. The short motif at 303 to 307 (KFGKS) is the 'KMSKS' region element. Lys-306 provides a ligand contact to ATP.

Belongs to the class-I aminoacyl-tRNA synthetase family. In terms of assembly, homodimer.

The protein localises to the mitochondrion matrix. It catalyses the reaction tRNA(Tyr) + L-tyrosine + ATP = L-tyrosyl-tRNA(Tyr) + AMP + diphosphate + H(+). Functionally, catalyzes the attachment of tyrosine to tRNA(Tyr) in a two-step reaction: tyrosine is first activated by ATP to form Tyr-AMP and then transferred to the acceptor end of tRNA(Tyr). This chain is Tyrosine--tRNA ligase, mitochondrial (MSY1), found in Saccharomyces cerevisiae (strain ATCC 204508 / S288c) (Baker's yeast).